The chain runs to 124 residues: NAD(P)H-quinone oxidoreductase subunit 5, chloroplastic (124 aa).

Transmembrane regions (helical) follow at residues 22-42 (TPIS…FLVA), 44-64 (LLPL…IGII), and 91-111 (LGYM…FHLI).

It belongs to the complex I subunit 5 family. As to quaternary structure, NDH is composed of at least 16 different subunits, 5 of which are encoded in the nucleus.

It is found in the plastid. The protein resides in the chloroplast thylakoid membrane. The enzyme catalyses a plastoquinone + NADH + (n+1) H(+)(in) = a plastoquinol + NAD(+) + n H(+)(out). The catalysed reaction is a plastoquinone + NADPH + (n+1) H(+)(in) = a plastoquinol + NADP(+) + n H(+)(out). In terms of biological role, NDH shuttles electrons from NAD(P)H:plastoquinone, via FMN and iron-sulfur (Fe-S) centers, to quinones in the photosynthetic chain and possibly in a chloroplast respiratory chain. The immediate electron acceptor for the enzyme in this species is believed to be plastoquinone. Couples the redox reaction to proton translocation, and thus conserves the redox energy in a proton gradient. This chain is NAD(P)H-quinone oxidoreductase subunit 5, chloroplastic (ndhF), found in Pisum sativum (Garden pea).